The sequence spans 407 residues: Eukaryotic initiation factor 4A-II (407 aa).

The interval 1–22 (MSGGSADYNREHGGPEGMDPDG) is disordered. A Q motif motif is present at residues 33-61 (DNFDDMNLKESLLRGIYAYGFEKPSAIQQ). One can recognise a Helicase ATP-binding domain in the interval 64-235 (IIPCIKGYDV…KKFMRDPIRI (172 aa)). An ATP-binding site is contributed by 77–84 (AQSGTGKT). Threonine 159 is subject to Phosphothreonine. The DEAD box signature appears at 183–186 (DEAD). A Helicase C-terminal domain is found at 246–407 (GIKQFYINVE…EMPMNVADLI (162 aa)).

It belongs to the DEAD box helicase family. eIF4A subfamily. As to quaternary structure, eIF4F is a multi-subunit complex, the composition of which varies with external and internal environmental conditions. It is composed of at least EIF4A, EIF4E and EIF4G1/EIFFG3. Interacts with EIF4E. May interact with NOM1.

It carries out the reaction ATP + H2O = ADP + phosphate + H(+). ATP-dependent RNA helicase which is a subunit of the eIF4F complex involved in cap recognition and is required for mRNA binding to ribosome. In the current model of translation initiation, eIF4A unwinds RNA secondary structures in the 5'-UTR of mRNAs which is necessary to allow efficient binding of the small ribosomal subunit, and subsequent scanning for the initiator codon. The polypeptide is Eukaryotic initiation factor 4A-II (EIF4A2) (Bos taurus (Bovine)).